The chain runs to 242 residues: Glucosamine-6-phosphate deaminase (242 aa).

D67 acts as the Proton acceptor; for enolization step in catalysis. N136 functions as the For ring-opening step in the catalytic mechanism. H138 (proton acceptor; for ring-opening step) is an active-site residue. E143 acts as the For ring-opening step in catalysis.

This sequence belongs to the glucosamine/galactosamine-6-phosphate isomerase family. NagB subfamily.

The enzyme catalyses alpha-D-glucosamine 6-phosphate + H2O = beta-D-fructose 6-phosphate + NH4(+). Its pathway is amino-sugar metabolism; N-acetylneuraminate degradation; D-fructose 6-phosphate from N-acetylneuraminate: step 5/5. In terms of biological role, catalyzes the reversible isomerization-deamination of glucosamine 6-phosphate (GlcN6P) to form fructose 6-phosphate (Fru6P) and ammonium ion. This chain is Glucosamine-6-phosphate deaminase, found in Clostridium perfringens (strain SM101 / Type A).